The chain runs to 132 residues: Small ribosomal subunit protein uS8 (132 aa).

Belongs to the universal ribosomal protein uS8 family. In terms of assembly, part of the 30S ribosomal subunit. Contacts proteins S5 and S12.

One of the primary rRNA binding proteins, it binds directly to 16S rRNA central domain where it helps coordinate assembly of the platform of the 30S subunit. The sequence is that of Small ribosomal subunit protein uS8 from Cereibacter sphaeroides (strain ATCC 17025 / ATH 2.4.3) (Rhodobacter sphaeroides).